The chain runs to 83 residues: RNA-binding protein Hfq (83 aa).

A Sm domain is found at 11–71; that stretch reads DTFLNHVRKN…ISTIMPGHPV (61 aa).

The protein belongs to the Hfq family. In terms of assembly, homohexamer.

Functionally, RNA chaperone that binds small regulatory RNA (sRNAs) and mRNAs to facilitate mRNA translational regulation in response to envelope stress, environmental stress and changes in metabolite concentrations. Also binds with high specificity to tRNAs. The chain is RNA-binding protein Hfq from Methylobacterium radiotolerans (strain ATCC 27329 / DSM 1819 / JCM 2831 / NBRC 15690 / NCIMB 10815 / 0-1).